The chain runs to 329 residues: MKQFWVDARPWNKDVVTTAIESGADAVVAEKAADVKRLGRITTVAPDGDLVPGKDVIECTITDKASENEAAANGKNRIVIVTTSDWTVIPLENLVAQSDKIIAEVKNVHEAELAIHVLEKGVYGILLKTSDPAVVKAVAALVKSTSGSVQLVPFTVTKIHPVGMGDRVCVDTCSMLADGDGMLMGNTSSAMLLVHAETLENPYVAPRPFRVNAGAVHAYILLPDGKTAYLADLSIGGQVLVSDHKGAGRSAIVGRTKIERRPLLLVEATAEGGAKASLILQNAETIRLVAPDGSAISVVNLAPGNKILGCALEGGRHFGMAVKETIREK.

It belongs to the archaeal-type DHQ synthase family.

It carries out the reaction 2-amino-2,3,7-trideoxy-D-lyxo-hept-6-ulosonate + NAD(+) + H2O = 3-dehydroquinate + NH4(+) + NADH + H(+). In terms of biological role, catalyzes the oxidative deamination and cyclization of 2-amino-3,7-dideoxy-D-threo-hept-6-ulosonic acid (ADH) to yield 3-dehydroquinate (DHQ), which is fed into the canonical shikimic pathway of aromatic amino acid biosynthesis. The protein is 3-dehydroquinate synthase of Methanoregula boonei (strain DSM 21154 / JCM 14090 / 6A8).